Consider the following 83-residue polypeptide: MRLILSLPVLAVVLAMVLEGPAPAQAAPDVSSTLESISEKLTEFGRTVADKFRTAVDQIKKSDFPEKTRNWFSEMFNKLKEKF.

Positions 1–26 are cleaved as a signal peptide; sequence MRLILSLPVLAVVLAMVLEGPAPAQA.

This sequence belongs to the apolipoprotein C1 family.

The protein resides in the secreted. Functionally, inhibitor of lipoprotein binding to the low density lipoprotein (LDL) receptor, LDL receptor-related protein, and very low density lipoprotein (VLDL) receptor. Associates with high density lipoproteins (HDL) and the triacylglycerol-rich lipoproteins in the plasma and makes up about 10% of the protein of the VLDL and 2% of that of HDL. Appears to interfere directly with fatty acid uptake and is also the major plasma inhibitor of cholesteryl ester transfer protein (CETP). Binds free fatty acids and reduces their intracellular esterification. Modulates the interaction of APOE with beta-migrating VLDL and inhibits binding of beta-VLDL to the LDL receptor-related protein. This Rousettus aegyptiacus (Egyptian fruit bat) protein is Apolipoprotein C-I (APOC1).